Consider the following 567-residue polypeptide: Proline--tRNA ligase (567 aa).

The protein belongs to the class-II aminoacyl-tRNA synthetase family. ProS type 1 subfamily. As to quaternary structure, homodimer.

Its subcellular location is the cytoplasm. It carries out the reaction tRNA(Pro) + L-proline + ATP = L-prolyl-tRNA(Pro) + AMP + diphosphate. Catalyzes the attachment of proline to tRNA(Pro) in a two-step reaction: proline is first activated by ATP to form Pro-AMP and then transferred to the acceptor end of tRNA(Pro). As ProRS can inadvertently accommodate and process non-cognate amino acids such as alanine and cysteine, to avoid such errors it has two additional distinct editing activities against alanine. One activity is designated as 'pretransfer' editing and involves the tRNA(Pro)-independent hydrolysis of activated Ala-AMP. The other activity is designated 'posttransfer' editing and involves deacylation of mischarged Ala-tRNA(Pro). The misacylated Cys-tRNA(Pro) is not edited by ProRS. This Staphylococcus aureus (strain COL) protein is Proline--tRNA ligase.